We begin with the raw amino-acid sequence, 218 residues long: Glycerol-3-phosphate acyltransferase (218 aa).

Helical transmembrane passes span 5-25 (ALGM…ILIC), 53-73 (LAAA…VWLA), 80-100 (PFYL…PVFF), 115-135 (IAAI…LTVL), and 138-158 (GYSS…VWWF).

The protein belongs to the PlsY family. In terms of assembly, probably interacts with PlsX.

Its subcellular location is the cell inner membrane. It carries out the reaction an acyl phosphate + sn-glycerol 3-phosphate = a 1-acyl-sn-glycero-3-phosphate + phosphate. Its pathway is lipid metabolism; phospholipid metabolism. In terms of biological role, catalyzes the transfer of an acyl group from acyl-phosphate (acyl-PO(4)) to glycerol-3-phosphate (G3P) to form lysophosphatidic acid (LPA). This enzyme utilizes acyl-phosphate as fatty acyl donor, but not acyl-CoA or acyl-ACP. This is Glycerol-3-phosphate acyltransferase from Proteus mirabilis (strain HI4320).